The chain runs to 146 residues: Hut operon positive regulatory protein (146 aa).

It belongs to the HutP family. As to quaternary structure, homohexamer.

Functionally, antiterminator that binds to cis-acting regulatory sequences on the mRNA in the presence of histidine, thereby suppressing transcription termination and activating the hut operon for histidine utilization. In Bacillus mycoides (strain KBAB4) (Bacillus weihenstephanensis), this protein is Hut operon positive regulatory protein.